The chain runs to 309 residues: Peptide methionine sulfoxide reductase MsrA/MsrB (309 aa).

The segment at 1-153 (MIYLAEGCFW…PNGYCHIDIN (153 aa)) is peptide methionine sulfoxide reductase A. Residue cysteine 8 is part of the active site. One can recognise a MsrB domain in the interval 170 to 293 (ATEIKAKLSA…NSLSITFIPK (124 aa)). The active-site Nucleophile is the cysteine 282.

The protein in the N-terminal section; belongs to the MsrA Met sulfoxide reductase family. In the C-terminal section; belongs to the MsrB Met sulfoxide reductase family.

The catalysed reaction is L-methionyl-[protein] + [thioredoxin]-disulfide + H2O = L-methionyl-(S)-S-oxide-[protein] + [thioredoxin]-dithiol. It carries out the reaction [thioredoxin]-disulfide + L-methionine + H2O = L-methionine (S)-S-oxide + [thioredoxin]-dithiol. The enzyme catalyses L-methionyl-[protein] + [thioredoxin]-disulfide + H2O = L-methionyl-(R)-S-oxide-[protein] + [thioredoxin]-dithiol. Has an important function as a repair enzyme for proteins that have been inactivated by oxidation. Catalyzes the reversible oxidation-reduction of methionine sulfoxide in proteins to methionine. The protein is Peptide methionine sulfoxide reductase MsrA/MsrB (msrAB) of Streptococcus pyogenes serotype M3 (strain ATCC BAA-595 / MGAS315).